A 1733-amino-acid chain; its full sequence is Gag-Pol polyprotein (1733 aa).

A lipid anchor (N-myristoyl glycine; by host) is attached at Gly2. Residues 109–112 (PSAP) carry the PTAP/PSAP motif motif. Pro residues predominate over residues 112-121 (PSLLPEPPLS). 2 disordered regions span residues 112-196 (PSLL…ASRL) and 202-221 (LPVA…GGNG). The short motif at 128–132 (LYPAL) is the LYPX(n)L motif element. The span at 159–170 (DPPPYRDPGPPP) shows a compositional bias: pro residues. The short motif at 160–163 (PPPY) is the PPXY motif element. Position 190 is a phosphoserine; by host (Ser190). The interval 343–391 (GRSPTNLAKVKGITQGPNESPSAFLERLKEAYRRYTPYDPEDPGQETNV) is interaction with host PIAS4. The tract at residues 428–433 (IFNKRE) is interaction with host UBE2I. Composition is skewed to basic and acidic residues over residues 432 to 464 (RETP…EKER) and 484 to 496 (KQDR…RRPQ). Disordered stretches follow at residues 432 to 496 (RETP…RRPQ) and 511 to 550 (WAKD…EPRI). Positions 436–476 (EEREERIKRETEEKEERRRAEDEQKEKERDRRRHREMSKLL) form a coiled coil. The CCHC-type zinc finger occupies 500 to 517 (DQCAYCKEKGHWAKDCPK). The Peptidase A2 domain occupies 559 to 629 (VTFLVDTGAQ…CPYPLLGRDL (71 aa)). The Protease; shared with dimeric partner role is filled by Asp564. One can recognise a Reverse transcriptase domain in the interval 739–930 (LDQGILVPCQ…KQVKYLGYLL (192 aa)). Asp807, Asp881, Asp882, Asp1181, Glu1219, Asp1240, and Asp1310 together coordinate Mg(2+). Positions 1172–1318 (PDADHTWYTD…ADQAAREVAT (147 aa)) constitute an RNase H type-1 domain. The HHCC-type zinc finger occupies 1385–1425 (HQLTHLSFSKTKALLERSPSPYYMLNRDRTLKNITETCKAC). The Integrase catalytic domain occupies 1442–1600 (RGHRPGTHWE…TPYEILYGAP (159 aa)). Positions 1453 and 1512 each coordinate Mg(2+).

As to quaternary structure, homohexamer; further associates as homomultimer. The virus core is composed of a lattice formed from hexagonal rings, each containing six capsid monomers. Interacts with mouse UBE2I and mouse PIAS4. Interacts (via PPXY motif) with host NEDD4. Interacts (via PSAP motif) with host TSG101. Interacts (via LYPX(n)L motif) with host PDCD6IP. In terms of assembly, the reverse transcriptase is a monomer (Potential). Interacts (via RNase domains) with host release factor ETF1; this interaction is essential for translational readthrough of amber codon between viral gag and pol genes, as well as for viral replication. As to quaternary structure, homodimer. Requires Mg(2+) as cofactor. Post-translationally, ubiquitinated by ITCH. Gag can recruit the ubiquitin ligase Itch in an L domain-independent manner to facilitate virus release via a mechanism that involves Gag ubiquitination. Specific enzymatic cleavages by the viral protease yield mature proteins. The protease is released by autocatalytic cleavage. The polyprotein is cleaved during and after budding, this process is termed maturation. In terms of processing, sumoylated; which is required for virus replication. Post-translationally, phosphorylated on serine residues.

Its subcellular location is the virion. It localises to the host cell membrane. The protein resides in the host late endosome membrane. The protein localises to the host endosome. It is found in the host multivesicular body. Its subcellular location is the host cytoplasm. The catalysed reaction is DNA(n) + a 2'-deoxyribonucleoside 5'-triphosphate = DNA(n+1) + diphosphate. The enzyme catalyses Endonucleolytic cleavage to 5'-phosphomonoester.. Most efficiently inhibited by Amprenavir, which is able to block Gag-Pol processing in infected cells. Plays a role in budding and is processed by the viral protease during virion maturation outside the cell. During budding, it recruits, in a PPXY-dependent or independent manner, Nedd4-like ubiquitin ligases that conjugate ubiquitin molecules to Gag-Pol, or to Gag-Pol binding host factors. Interaction with HECT ubiquitin ligases probably links the viral protein to the host ESCRT pathway and facilitates release. In terms of biological role, targets Gag and gag-pol polyproteins to the plasma membrane via a multipartite membrane binding signal, that includes its myristoylated N-terminus. Also mediates nuclear localization of the pre-integration complex. Its function is as follows. Constituent of the pre-integration complex (PIC) which tethers the latter to mitotic chromosomes. This allows the integration of the viral genome into the host DNA. Functionally, forms the spherical core of the virion that encapsulates the genomic RNA-nucleocapsid complex. Involved in the packaging and encapsidation of two copies of the genome. Binds with high affinity to conserved UCUG elements within the packaging signal, located near the 5'-end of the genome. This binding is dependent on genome dimerization. Acts as a nucleic acid chaperone which is involved in rearrangement of nucleic acid secondary structures during gRNA retrotranscription. In terms of biological role, the aspartyl protease mediates proteolytic cleavages of Gag and Gag-Pol polyproteins during or shortly after the release of the virion from the plasma membrane. Cleavages take place as an ordered, step-wise cascade to yield mature proteins. This process is called maturation. Displays maximal activity during the budding process just prior to particle release from the cell (Potential). Cleaves the translation initiation factor eIF4G leading to the inhibition of host cap-dependent translation. Its function is as follows. RT is a multifunctional enzyme that converts the viral dimeric RNA genome into dsDNA in the cytoplasm, shortly after virus entry into the cell. This enzyme displays a DNA polymerase activity that can copy either DNA or RNA templates, and a ribonuclease H (RNase H) activity that cleaves the RNA strand of RNA-DNA heteroduplexes in a partially processive 3' to 5' endonucleasic mode. Conversion of viral genomic RNA into dsDNA requires many steps. A tRNA binds to the primer-binding site (PBS) situated at the 5' end of the viral RNA. RT uses the 3' end of the tRNA primer to perform a short round of RNA-dependent minus-strand DNA synthesis. The reading proceeds through the U5 region and ends after the repeated (R) region which is present at both ends of viral RNA. The portion of the RNA-DNA heteroduplex is digested by the RNase H, resulting in a ssDNA product attached to the tRNA primer. This ssDNA/tRNA hybridizes with the identical R region situated at the 3' end of viral RNA. This template exchange, known as minus-strand DNA strong stop transfer, can be either intra- or intermolecular. RT uses the 3' end of this newly synthesized short ssDNA to perform the RNA-dependent minus-strand DNA synthesis of the whole template. RNase H digests the RNA template except for a polypurine tract (PPT) situated at the 5' end of the genome. It is not clear if both polymerase and RNase H activities are simultaneous. RNase H probably can proceed both in a polymerase-dependent (RNA cut into small fragments by the same RT performing DNA synthesis) and a polymerase-independent mode (cleavage of remaining RNA fragments by free RTs). Secondly, RT performs DNA-directed plus-strand DNA synthesis using the PPT that has not been removed by RNase H as primers. PPT and tRNA primers are then removed by RNase H. The 3' and 5' ssDNA PBS regions hybridize to form a circular dsDNA intermediate. Strand displacement synthesis by RT to the PBS and PPT ends produces a blunt ended, linear dsDNA copy of the viral genome that includes long terminal repeats (LTRs) at both ends. Functionally, catalyzes viral DNA integration into the host chromosome, by performing a series of DNA cutting and joining reactions. This enzyme activity takes place after virion entry into a cell and reverse transcription of the RNA genome in dsDNA. The first step in the integration process is 3' processing. This step requires a complex comprising the viral genome, matrix protein and integrase. This complex is called the pre-integration complex (PIC). The integrase protein removes 2 nucleotides from each 3' end of the viral DNA, leaving recessed CA OH's at the 3' ends. In the second step that requires cell division, the PIC enters cell nucleus. In the third step, termed strand transfer, the integrase protein joins the previously processed 3' ends to the 5' ends of strands of target cellular DNA at the site of integration. The last step is viral DNA integration into host chromosome. In Cas-Br-E murine leukemia virus, this protein is Gag-Pol polyprotein (gag-pol).